A 526-amino-acid chain; its full sequence is Sugar transport protein 13 (526 aa).

Residues 1–18 (MTGGGFATSANGVEFEAK) are Cytoplasmic-facing. A helical membrane pass occupies residues 19–39 (ITPIVIISCIMAATGGLMFGY). Over 40 to 81 (DVGVSGGVTSMPDFLEKFFPVVYRKVVAGADKDSNYCKYDNQ) the chain is Extracellular. The chain crosses the membrane as a helical span at residues 82–102 (GLQLFTSSLYLAGLTATFFAS). The Cytoplasmic portion of the chain corresponds to 103–111 (YTTRTLGRR). A helical membrane pass occupies residues 112–132 (LTMLIAGVFFIIGVALNAGAQ). Topologically, residues 133 to 141 (DLAMLIAGR) are extracellular. The chain crosses the membrane as a helical span at residues 142-162 (ILLGCGVGFANQAVPLFLSEI). Topologically, residues 163-168 (APTRIR) are cytoplasmic. A helical transmembrane segment spans residues 169–189 (GGLNILFQLNVTIGILFANLV). Residues 190-203 (NYGTAKIKGGWGWR) are Extracellular-facing. A helical membrane pass occupies residues 204-224 (LSLGLAGIPALLLTVGALLVT). Topologically, residues 225–296 (ETPNSLVERG…IAVALQIFQQ (72 aa)) are cytoplasmic. Residues 297 to 317 (CTGINAIMFYAPVLFSTLGFG) traverse the membrane as a helical segment. At 318–319 (SD) the chain is on the extracellular side. The helical transmembrane segment at 320 to 340 (ASLYSAVVTGAVNVLSTLVSI) threads the bilayer. The Cytoplasmic segment spans residues 341-349 (YSVDKVGRR). The chain crosses the membrane as a helical span at residues 350–370 (VLLLEAGVQMFFSQVVIAIIL). At 371–383 (GVKVTDTSTNLSK) the chain is on the extracellular side. The helical transmembrane segment at 384-404 (GFAILVVVMICTYVAAFAWSW) threads the bilayer. Residues 405 to 426 (GPLGWLIPSETFPLETRSAGQS) lie on the Cytoplasmic side of the membrane. The chain crosses the membrane as a helical span at residues 427–447 (VTVCVNLLFTFIIAQAFLSML). Over 448–451 (CHFK) the chain is Extracellular. A helical transmembrane segment spans residues 452–472 (FGIFIFFSAWVLIMSVFVMFL). At 473–526 (LPETKNIPIEEMTERVWKKHWFWARFMDDHNDHEFVNGEKSNGKSNGFDPSTRL) the chain is on the cytoplasmic side.

The protein belongs to the major facilitator superfamily. Sugar transporter (TC 2.A.1.1) family.

It localises to the cell membrane. Functionally, mediates an active uptake of hexoses, probably by sugar/hydrogen symport. In Arabidopsis thaliana (Mouse-ear cress), this protein is Sugar transport protein 13 (STP13).